A 144-amino-acid polypeptide reads, in one-letter code: Maximins 3/H9 type 2 (144 aa).

A signal peptide spans 1–18; that stretch reads MNFKYIVAVSFLIASAYA. 2 propeptides span residues 19–43 and 74–123; these read RSVQ…REIR and TAEE…KEKR. I143 is subject to Isoleucine amide.

It belongs to the bombinin family. Expressed by the skin glands.

The protein resides in the secreted. Its function is as follows. Maximin-3 shows antibacterial activity against both Gram-positive and Gram-negative bacteria. It also shows antimicrobial activity against the fungus C.albicans, but not against A.flavus nor P.uticale. It has little hemolytic activity. It possess a significant cytotoxicity against tumor cell lines. It possess a significant anti-HIV activity. It shows high spermicidal activity. In terms of biological role, maximin-H9 shows antimicrobial activity against bacteria and against the fungus C.albicans. Shows strong hemolytic activity. This Bombina maxima (Giant fire-bellied toad) protein is Maximins 3/H9 type 2.